The following is a 243-amino-acid chain: Hydroxyacylglutathione hydrolase (243 aa).

His-52, His-54, Asp-56, His-57, His-108, Asp-125, and His-163 together coordinate Zn(2+).

This sequence belongs to the metallo-beta-lactamase superfamily. Glyoxalase II family. As to quaternary structure, monomer. Requires Zn(2+) as cofactor.

The catalysed reaction is an S-(2-hydroxyacyl)glutathione + H2O = a 2-hydroxy carboxylate + glutathione + H(+). It participates in secondary metabolite metabolism; methylglyoxal degradation; (R)-lactate from methylglyoxal: step 2/2. Functionally, thiolesterase that catalyzes the hydrolysis of S-D-lactoyl-glutathione to form glutathione and D-lactic acid. The sequence is that of Hydroxyacylglutathione hydrolase from Haemophilus influenzae (strain PittGG).